A 153-amino-acid chain; its full sequence is General odorant-binding protein lush (153 aa).

The signal sequence occupies residues 1 to 29 (MKHWKRRSSAVFAIVLQVLVLLLPDPAVA). 3 disulfide bridges follow: C46/C79, C75/C132, and C121/C141. The 1-propanol site is built by S81 and T86. Butan-1-ol-binding residues include S81 and T86. Ethanol contacts are provided by S81 and T86.

It belongs to the PBP/GOBP family. As to expression, specifically expressed in chemosensory system in both males and females. Expressed in a subset of trichoid chemosensory sensilla located on the ventral-lateral surface of the third antennal segment. Secreted from non-neuronal support cells into the sensillum lymph that bathes the olfactory neurons within these sensilla.

The protein localises to the secreted. Its function is as follows. Odorant-binding protein required for olfactory behavior and for activity of pheromone-sensitive neurons. Binds to alcohols and mediates avoidance behavior to high concentrations of alcohols, the alcohol-binding possibly resulting in activation of receptors on T2B neurons, the activation of these receptors inhibiting these neurons. Acts in concert with Snmp and lush to capture cVA molecules on the surface of Or67d expressing olfactory dendrites and facilitate their transfer to the odorant-receptor Orco complex. Required for cVA response, probably by binding to VA. May act by serving as an adapter that bridges the presence of gaseous pheromone molecules, cVA, to activation of specific neuronal receptors expressed on T1 olfactory neurons, possibly via a specific conformational change induced by cVA that in turn activates T1 receptors. T1 neurons are excited by the pheromone VA, while T2 neurons are inhibited by alcohols. Also binds to phthalates. This chain is General odorant-binding protein lush (lush), found in Drosophila melanogaster (Fruit fly).